Consider the following 321-residue polypeptide: Ferrochelatase (321 aa).

Residues histidine 194 and glutamate 275 each contribute to the Fe cation site.

It belongs to the ferrochelatase family.

It localises to the cytoplasm. The catalysed reaction is heme b + 2 H(+) = protoporphyrin IX + Fe(2+). The protein operates within porphyrin-containing compound metabolism; protoheme biosynthesis; protoheme from protoporphyrin-IX: step 1/1. Its function is as follows. Catalyzes the ferrous insertion into protoporphyrin IX. This chain is Ferrochelatase, found in Wigglesworthia glossinidia brevipalpis.